The sequence spans 261 residues: 3-methyl-2-oxobutanoate hydroxymethyltransferase (261 aa).

Mg(2+) contacts are provided by aspartate 42 and aspartate 81. 3-methyl-2-oxobutanoate is bound by residues 42–43 (DS), aspartate 81, and lysine 110. Residue glutamate 112 participates in Mg(2+) binding. Glutamate 179 acts as the Proton acceptor in catalysis.

Belongs to the PanB family. As to quaternary structure, homodecamer; pentamer of dimers. The cofactor is Mg(2+).

The protein localises to the cytoplasm. The catalysed reaction is 3-methyl-2-oxobutanoate + (6R)-5,10-methylene-5,6,7,8-tetrahydrofolate + H2O = 2-dehydropantoate + (6S)-5,6,7,8-tetrahydrofolate. Its pathway is cofactor biosynthesis; coenzyme A biosynthesis. In terms of biological role, catalyzes the reversible reaction in which hydroxymethyl group from 5,10-methylenetetrahydrofolate is transferred onto alpha-ketoisovalerate to form ketopantoate. In Pyrobaculum neutrophilum (strain DSM 2338 / JCM 9278 / NBRC 100436 / V24Sta) (Thermoproteus neutrophilus), this protein is 3-methyl-2-oxobutanoate hydroxymethyltransferase.